The following is a 258-amino-acid chain: MLKEKMYDELILSTCRVLKLGPADFRVTDKNLFSKNPKFPLCDILLKLDFAYSLEYLLSLWEDLTKQEARFIFKNTGGAVSMSCYLHAPIKQESQNIVKECNILNVNECLSVCLNDIEAIKPSSSGVLTKCIIRRNRDAAFIVEFVAFGPESESEYIALLKAIILKKKFLERQDLEKHRAARHIKKPLRLQLKSVGEMTSFRSINYMGNTKDAAVFPVTVPIFARRNNILCGFLVAALLIVCYVIFKEFALSADFSAV.

Residues 1-228 (MLKEKMYDEL…TVPIFARRNN (228 aa)) are Perinuclear space-facing. A helical membrane pass occupies residues 229 to 249 (ILCGFLVAALLIVCYVIFKEF). Residues 250–258 (ALSADFSAV) lie on the Nuclear side of the membrane.

Belongs to the herpesviridae NEC2 protein family. As to quaternary structure, forms a heterohexameric complex with NEC1. Phosphorylated.

The protein localises to the host nucleus inner membrane. Its function is as follows. Plays an essential role in virion nuclear egress, the first step of virion release from infected cell. Within the host nucleus, NEC1 interacts with the newly formed capsid through the vertexes and directs it to the inner nuclear membrane by associating with NEC2. Induces the budding of the capsid at the inner nuclear membrane as well as its envelopment into the perinuclear space. There, the NEC1/NEC2 complex promotes the fusion of the enveloped capsid with the outer nuclear membrane and the subsequent release of the viral capsid into the cytoplasm where it will reach the secondary budding sites in the host Golgi or trans-Golgi network. The sequence is that of Nuclear egress protein 2 from Homo sapiens (Human).